A 170-amino-acid chain; its full sequence is Adenine phosphoribosyltransferase (170 aa).

It belongs to the purine/pyrimidine phosphoribosyltransferase family. In terms of assembly, homodimer.

The protein resides in the cytoplasm. It carries out the reaction AMP + diphosphate = 5-phospho-alpha-D-ribose 1-diphosphate + adenine. It participates in purine metabolism; AMP biosynthesis via salvage pathway; AMP from adenine: step 1/1. In terms of biological role, catalyzes a salvage reaction resulting in the formation of AMP, that is energically less costly than de novo synthesis. This is Adenine phosphoribosyltransferase from Streptococcus suis (strain 98HAH33).